The sequence spans 103 residues: Small ribosomal subunit protein uS10 (103 aa).

This sequence belongs to the universal ribosomal protein uS10 family. As to quaternary structure, part of the 30S ribosomal subunit.

Its function is as follows. Involved in the binding of tRNA to the ribosomes. The sequence is that of Small ribosomal subunit protein uS10 from Alteromonas mediterranea (strain DSM 17117 / CIP 110805 / LMG 28347 / Deep ecotype).